The primary structure comprises 609 residues: NADH-ubiquinone oxidoreductase chain 5 (609 aa).

16 helical membrane passes run 3-23 (VINL…LPIV), 41-61 (TAIS…IYSG), 90-110 (MIFV…SMWY), 115-135 (PFIN…MILV), 140-160 (LFQL…LIGW), 174-194 (AVLY…WFLI), 214-236 (VPLM…HPWL), 244-264 (TPVS…FLLI), 276-296 (MQTT…ICAL), 304-323 (IIAF…IGIN), 328-350 (AFLH…GSII), 368-388 (VLPF…GMPF), 410-432 (WALL…IMFF), 460-480 (LLLG…PTST), 491-511 (LMAL…NLTS), and 585-605 (GLIK…LMMI).

Belongs to the complex I subunit 5 family. Core subunit of respiratory chain NADH dehydrogenase (Complex I) which is composed of 45 different subunits.

It localises to the mitochondrion inner membrane. The enzyme catalyses a ubiquinone + NADH + 5 H(+)(in) = a ubiquinol + NAD(+) + 4 H(+)(out). In terms of biological role, core subunit of the mitochondrial membrane respiratory chain NADH dehydrogenase (Complex I) which catalyzes electron transfer from NADH through the respiratory chain, using ubiquinone as an electron acceptor. Essential for the catalytic activity and assembly of complex I. In Halichoerus grypus (Gray seal), this protein is NADH-ubiquinone oxidoreductase chain 5 (MT-ND5).